An 848-amino-acid polypeptide reads, in one-letter code: ATP-dependent Clp protease ATP-binding subunit ClpC1 (848 aa).

The 143-residue stretch at 2 to 144 (FERFTDRARK…RQQVIQLLSG (143 aa)) folds into the Clp R domain. Repeat regions lie at residues 5-70 (FTDR…IGQG) and 80-144 (FTPR…LLSG). The interval 171-418 (LDQFGRNLTA…RMRIRRMTAP (248 aa)) is i. 216–223 (GEPGVGKT) is an ATP binding site. Positions 425–460 (DEKIAEARREKESAIDAQDFEKAASLRDREKTLVAQ) constitute a UVR domain. Residues 479-670 (VDDEQIAEVL…VLIFTSNLGT (192 aa)) are II. 553–560 (GPSGVGKT) is a binding site for ATP. Residues 821–848 (TGTRKPPAEPDLAKAGAHSAGGPEPAAR) form a disordered region.

Belongs to the ClpA/ClpB family. ClpC subfamily.

In terms of biological role, ATP-dependent specificity component of the Clp protease. It directs the protease to specific substrates. Can perform chaperone functions in the absence of ClpP. In Mycobacterium tuberculosis (strain CDC 1551 / Oshkosh), this protein is ATP-dependent Clp protease ATP-binding subunit ClpC1 (clpC1).